The sequence spans 238 residues: tRNA (guanine-N(7)-)-methyltransferase (238 aa).

4 residues coordinate S-adenosyl-L-methionine: E71, E96, D123, and D146. Residue D146 is part of the active site. Substrate-binding positions include K150, D182, and 217–220 (TKFE).

The protein belongs to the class I-like SAM-binding methyltransferase superfamily. TrmB family.

The enzyme catalyses guanosine(46) in tRNA + S-adenosyl-L-methionine = N(7)-methylguanosine(46) in tRNA + S-adenosyl-L-homocysteine. It participates in tRNA modification; N(7)-methylguanine-tRNA biosynthesis. Its function is as follows. Catalyzes the formation of N(7)-methylguanine at position 46 (m7G46) in tRNA. The sequence is that of tRNA (guanine-N(7)-)-methyltransferase from Methylobacillus flagellatus (strain ATCC 51484 / DSM 6875 / VKM B-1610 / KT).